The following is a 239-amino-acid chain: Ribonuclease PH (239 aa).

Phosphate is bound by residues Arg86 and 124 to 126 (GTR).

It belongs to the RNase PH family. In terms of assembly, homohexameric ring arranged as a trimer of dimers.

The catalysed reaction is tRNA(n+1) + phosphate = tRNA(n) + a ribonucleoside 5'-diphosphate. Its function is as follows. Phosphorolytic 3'-5' exoribonuclease that plays an important role in tRNA 3'-end maturation. Removes nucleotide residues following the 3'-CCA terminus of tRNAs; can also add nucleotides to the ends of RNA molecules by using nucleoside diphosphates as substrates, but this may not be physiologically important. Probably plays a role in initiation of 16S rRNA degradation (leading to ribosome degradation) during starvation. The polypeptide is Ribonuclease PH (Psychromonas ingrahamii (strain DSM 17664 / CCUG 51855 / 37)).